Consider the following 144-residue polypeptide: 3-dehydroquinate dehydratase (144 aa).

The Proton acceptor role is filled by Y24. Residues N76, H82, and D89 each coordinate substrate. The active-site Proton donor is the H102. Residues 103-104 and R113 contribute to the substrate site; that span reads LS.

Belongs to the type-II 3-dehydroquinase family. As to quaternary structure, homododecamer.

It catalyses the reaction 3-dehydroquinate = 3-dehydroshikimate + H2O. The protein operates within metabolic intermediate biosynthesis; chorismate biosynthesis; chorismate from D-erythrose 4-phosphate and phosphoenolpyruvate: step 3/7. Functionally, catalyzes a trans-dehydration via an enolate intermediate. In Bordetella avium (strain 197N), this protein is 3-dehydroquinate dehydratase.